Consider the following 170-residue polypeptide: 2S seed storage protein 2 (170 aa).

The first 21 residues, 1–21, serve as a signal peptide directing secretion; it reads MANKLFLVCATFALCFLLTNA. Propeptides lie at residues 22 to 37 and 73 to 88; these read SIYR…DASN and GPSL…DIEN.

This sequence belongs to the 2S seed storage albumins family. The mature protein consists of a small and a large chain linked by disulfide bonds.

Its function is as follows. This is a 2S seed storage protein. The chain is 2S seed storage protein 2 (AT2S2) from Arabidopsis thaliana (Mouse-ear cress).